The chain runs to 1442 residues: ABC transporter G family member 35 (1442 aa).

The ABC transporter 1 domain occupies 169-442 (LGMIGIRLAK…FESFGFKCPE (274 aa)). Position 202–209 (202–209 (GPPSSGKT)) interacts with ATP. Residues 520–733 (ELLKSCWDKE…AFNAITVNEL (214 aa)) form the ABC transmembrane type-2 1 domain. 7 helical membrane passes run 538–558 (FFYVFKTVQIIIIAAITSTLY), 573–593 (IYVGSLLFAMIVNMFNGLAEM), 619–639 (LPTFLLGIPISIFESTAWMVV), 657–677 (FLIIFLIQQMAAGIFRFIAST), 683–703 (IANTGGVLVLLVVFLTGGFLL), 714–734 (WAYWISPLSYAFNAITVNELF), and 769–789 (IGVGGLLGFTVIFNGFFTLAL). The ABC transporter 2 domain maps to 840–1092 (MSFDDVKYFV…KVVEYFESFP (253 aa)). 885–892 (GVSGAGKT) provides a ligand contact to ATP. The ABC transmembrane type-2 2 domain maps to 1165–1379 (GQFKSCLWKQ…TIYGLITSQY (215 aa)). 7 helical membrane passes run 1186–1206 (LVRFIFTLATSLMIGSVFWQI), 1218–1238 (MVIGAIYAAVVFVGINNCSTV), 1272–1292 (LPYVLIQTTYYSLIIYSMVGF), 1299–1319 (FLWFIFINYFSFLYWTYYGMM), 1329–1349 (VASIFASAFYGIFNLFSGFFI), 1357–1377 (WWVWYYWICPVAWTIYGLITS), and 1414–1434 (PVAGVLVGFTVFFAFIFAFCI).

This sequence belongs to the ABC transporter superfamily. ABCG family. PDR (TC 3.A.1.205) subfamily. As to expression, ubiquitous with higher levels in roots.

It is found in the membrane. In terms of biological role, may be a general defense protein. The sequence is that of ABC transporter G family member 35 (ABCG35) from Arabidopsis thaliana (Mouse-ear cress).